Consider the following 349-residue polypeptide: Histone-lysine N-methyltransferase ATXR6 (349 aa).

Residues 1-28 (MVAVRRRRTQASNPRSEPPQHMSDHDSD) form a disordered region. The segment at 32-82 (DTVCEECSSGKQPAKLLLCDKCDKGFHLFCLRPILVSVPKGSWFCPSCSKH) adopts a PHD-type zinc-finger fold. The PIP motif signature appears at 92-99 (QTKIIDFF). The disordered stretch occupies residues 105–126 (PDSSQISSSSDSIGKKRKKTSL). A compositionally biased stretch (low complexity) spans 106–116 (DSSQISSSSDS). Residue methionine 190 participates in substrate binding. The SET domain occupies 214 to 337 (PPLMVVFDPY…KGERLYYDYN (124 aa)). S-adenosyl-L-methionine-binding positions include 224-226 (EGF) and 287-291 (RFISG). Residues arginine 309 and 339 to 340 (YE) contribute to the substrate site. Residues tyrosine 343 and valine 349 each contribute to the S-adenosyl-L-methionine site.

This sequence belongs to the class V-like SAM-binding methyltransferase superfamily. Histone-lysine methyltransferase family. TRX/MLL subfamily. Interacts with PCNA1 and PCNA2. Interacts (via PHD domain) with HTR1 (via N-terminus). Interacts with IPS1. Expressed in leaves, roots, stems, flowers and siliques. Up-regulated in tissues where cell division is active.

Its subcellular location is the nucleus. The catalysed reaction is L-lysyl(27)-[histone H3] + S-adenosyl-L-methionine = N(6)-methyl-L-lysyl(27)-[histone H3] + S-adenosyl-L-homocysteine + H(+). Histone methyltransferase that specifically monomethylates 'Lys-27' of histone H3 (H3K27me1). Has higher activity on nucleosomes containing H3.1 than H3.3. Involved in the formation of constitutive heterochromatin and the silencing of heterochromatic elements. May act as a positive regulator of the G1-S transition. Influences which sets of rRNA gene variants are expressed or silenced. Up-regulated by E2FB. The polypeptide is Histone-lysine N-methyltransferase ATXR6 (ATXR6) (Arabidopsis thaliana (Mouse-ear cress)).